The primary structure comprises 170 residues: Co-chaperone protein HscB homolog (170 aa).

The J domain occupies 5–79 (DHFSLFGLPA…RARYLCEQAG (75 aa)).

Belongs to the HscB family. Interacts with HscA and stimulates its ATPase activity.

Co-chaperone involved in the maturation of iron-sulfur cluster-containing proteins. Seems to help targeting proteins to be folded toward HscA. This chain is Co-chaperone protein HscB homolog, found in Bordetella petrii (strain ATCC BAA-461 / DSM 12804 / CCUG 43448).